We begin with the raw amino-acid sequence, 228 residues long: Sodium channel regulatory subunit beta-4 (228 aa).

The signal sequence occupies residues 1-30 (MSRAGNRGNTQARWLGIGLLGLFLLPMYLS). Residues 31-148 (LEVSVGKATT…KDLNNSATIF (118 aa)) enclose the Ig-like C2-type domain. The Extracellular portion of the chain corresponds to 31–161 (LEVSVGKATT…VDKLEEVDNT (131 aa)). N-linked (GlcNAc...) asparagine glycans are attached at residues Asn45, Asn71, Asn113, and Asn142. Cys53 and Cys131 form a disulfide bridge. A helical transmembrane segment spans residues 162 to 182 (VTLIILAVVGGVIGLLVCILL). Topologically, residues 183–228 (LKKLITFILKKTREKKKECLVSSSGNDNTENGLPGSKAEEKPPTKV) are cytoplasmic. Positions 199–228 (KECLVSSSGNDNTENGLPGSKAEEKPPTKV) are disordered. A compositionally biased stretch (polar residues) spans 203 to 213 (VSSSGNDNTEN). The segment covering 219-228 (KAEEKPPTKV) has biased composition (basic and acidic residues).

It belongs to the sodium channel auxiliary subunit SCN4B (TC 8.A.17) family. As to quaternary structure, a voltage-gated sodium (Nav) channel consists of an ion-conducting pore-forming alpha subunit functional on its own that is regulated by one or more beta subunits. The beta subunit SCN4B is disulfide-linked to the pore-forming alpha subunit. Interacts with SCN1A; regulatory subunit of SCN1A/Nav1.1. Interacts with SCN2A; regulatory subunit of SCN2A/Nav1.2. In terms of processing, contains an interchain disulfide bond with SCN2A. In terms of tissue distribution, expressed at a high level in dorsal root ganglia, at a lower level in brain, spinal cord, skeletal muscle and heart.

It localises to the cell membrane. Regulatory subunit of multiple voltage-gated sodium (Nav) channels directly mediating the depolarization of excitable membranes. Navs, also called VGSCs (voltage-gated sodium channels) or VDSCs (voltage-dependent sodium channels), operate by switching between closed and open conformations depending on the voltage difference across the membrane. In the open conformation they allow Na(+) ions to selectively pass through the pore, along their electrochemical gradient. The influx of Na+ ions provokes membrane depolarization, initiating the propagation of electrical signals throughout cells and tissues. The accessory beta subunits participate in localization and functional modulation of the Nav channels. Modulates the activity of SCN1A/Nav1.1. Modulates the activity of SCN2A/Nav1.2. The polypeptide is Sodium channel regulatory subunit beta-4 (Rattus norvegicus (Rat)).